We begin with the raw amino-acid sequence, 342 residues long: Probable transposase for insertion-like sequence element IS1161 (342 aa).

Residues 182 to 342 (IEERPEEINN…KKLFELTQTA (161 aa)) form the Integrase catalytic domain.

This sequence belongs to the transposase IS30 family.

In terms of biological role, required for the transposition of the insertion element. The sequence is that of Probable transposase for insertion-like sequence element IS1161 from Streptococcus salivarius.